The primary structure comprises 287 residues: Ribosomal RNA small subunit methyltransferase A (287 aa).

S-adenosyl-L-methionine-binding residues include Asn28, Leu30, Gly55, Glu77, Asp103, and Asn123.

It belongs to the class I-like SAM-binding methyltransferase superfamily. rRNA adenine N(6)-methyltransferase family. RsmA subfamily.

It localises to the cytoplasm. The catalysed reaction is adenosine(1518)/adenosine(1519) in 16S rRNA + 4 S-adenosyl-L-methionine = N(6)-dimethyladenosine(1518)/N(6)-dimethyladenosine(1519) in 16S rRNA + 4 S-adenosyl-L-homocysteine + 4 H(+). In terms of biological role, specifically dimethylates two adjacent adenosines (A1518 and A1519) in the loop of a conserved hairpin near the 3'-end of 16S rRNA in the 30S particle. May play a critical role in biogenesis of 30S subunits. This chain is Ribosomal RNA small subunit methyltransferase A, found in Rhodopseudomonas palustris (strain TIE-1).